Here is a 51-residue protein sequence, read N- to C-terminus: Lipid-anchored plasma membrane protein CPP3 (51 aa).

A disordered region spans residues 1-28 (MRHHQNMHYAPQQQPVYVQQPPPRRESG).

This sequence belongs to the CYSTM1 family. Post-translationally, palmitoylated near the C-terminus.

Its subcellular location is the cell membrane. The protein is Lipid-anchored plasma membrane protein CPP3 of Saccharomyces cerevisiae (strain ATCC 204508 / S288c) (Baker's yeast).